Consider the following 289-residue polypeptide: CCR4-associated factor 16 (289 aa).

Positions 7 to 249 (IEVRNLTYKF…SEVVNAKVNG (243 aa)) constitute an ABC transporter domain. 41–48 (GANGAGKS) is a binding site for ATP.

It belongs to the ABC transporter superfamily. In terms of assembly, interacts with CCR4 and SSN2.

It localises to the cytoplasm. The protein localises to the nucleus. The chain is CCR4-associated factor 16 (CAF16) from Saccharomyces cerevisiae (strain ATCC 204508 / S288c) (Baker's yeast).